The primary structure comprises 434 residues: Zinc finger protein kipf (434 aa).

In terms of domain architecture, ZAD spans 7 to 88 (NVCRTCMDET…EQSYQHFFRV (82 aa)). Residues cysteine 9, cysteine 12, cysteine 61, and cysteine 64 each coordinate Zn(2+). The interval 117–173 (QLKSDRQQDTQQMTKTQKPDDDLSQKQTLQAKLQEGNIDGPPESFTLHPRKRTCRTE) is disordered. The segment at 197–219 (YNCPHCSKRFCSQTQLRTHITDL) adopts a C2H2-type 1; degenerate zinc-finger fold. 3 consecutive C2H2-type zinc fingers follow at residues 221–243 (NRCP…LRNH), 249–271 (HKCF…LRTH), and 277–299 (LSCS…RREH). The disordered stretch occupies residues 295–328 (HRREHKQRPGSSKSESTKDPDSDDSDQAQDLKPK). Residues serine 316 and serine 319 each carry the phosphoserine modification. C2H2-type zinc fingers lie at residues 348–370 (PICD…MLTH), 377–399 (KKCT…ERGH), and 404–427 (FRCE…KRIH).

As to quaternary structure, homodimer; mediated by the ZAD domain. Interacts (via C2H2 type zinc finger 4) with rhi/rhino (via Chromo domain). Dimerization is required for association with DNA and interaction with rhi/rhino. As to expression, primarily expressed in ovaries and absent from testes. In ovaries very low levels in germline stem cells and cystoblasts but abundant in developing cysts and polyploid nurse cells.

It is found in the nucleus. Its subcellular location is the chromosome. Functionally, DNA-binding zinc finger protein that recruits chromo domain protein rhino/rhi to specific chromatin regions enriched in H3K9me2/3 histone methylation, mediating piRNA (piwi-interacting RNA) biogenesis. May bind to GC rich DNA sequences including a 5'-GRGGN-3' sequence motif. Nucleates rhi/rhino accumulation and stabilizes its expansion. Involved in piRNA transposon repression, particularly in the female ovary during oogenesis. In Drosophila melanogaster (Fruit fly), this protein is Zinc finger protein kipf.